The following is a 287-amino-acid chain: Phosphatidylserine decarboxylase proenzyme (287 aa).

Residues aspartate 89, histidine 146, and serine 252 each act as charge relay system; for autoendoproteolytic cleavage activity in the active site. The Schiff-base intermediate with substrate; via pyruvic acid; for decarboxylase activity role is filled by serine 252. Serine 252 carries the post-translational modification Pyruvic acid (Ser); by autocatalysis.

This sequence belongs to the phosphatidylserine decarboxylase family. PSD-B subfamily. Prokaryotic type I sub-subfamily. As to quaternary structure, heterodimer of a large membrane-associated beta subunit and a small pyruvoyl-containing alpha subunit. It depends on pyruvate as a cofactor. Post-translationally, is synthesized initially as an inactive proenzyme. Formation of the active enzyme involves a self-maturation process in which the active site pyruvoyl group is generated from an internal serine residue via an autocatalytic post-translational modification. Two non-identical subunits are generated from the proenzyme in this reaction, and the pyruvate is formed at the N-terminus of the alpha chain, which is derived from the carboxyl end of the proenzyme. The autoendoproteolytic cleavage occurs by a canonical serine protease mechanism, in which the side chain hydroxyl group of the serine supplies its oxygen atom to form the C-terminus of the beta chain, while the remainder of the serine residue undergoes an oxidative deamination to produce ammonia and the pyruvoyl prosthetic group on the alpha chain. During this reaction, the Ser that is part of the protease active site of the proenzyme becomes the pyruvoyl prosthetic group, which constitutes an essential element of the active site of the mature decarboxylase.

It localises to the cell membrane. The catalysed reaction is a 1,2-diacyl-sn-glycero-3-phospho-L-serine + H(+) = a 1,2-diacyl-sn-glycero-3-phosphoethanolamine + CO2. It functions in the pathway phospholipid metabolism; phosphatidylethanolamine biosynthesis; phosphatidylethanolamine from CDP-diacylglycerol: step 2/2. In terms of biological role, catalyzes the formation of phosphatidylethanolamine (PtdEtn) from phosphatidylserine (PtdSer). The chain is Phosphatidylserine decarboxylase proenzyme from Shewanella sediminis (strain HAW-EB3).